Consider the following 424-residue polypeptide: uncharacterized protein (424 aa).

A run of 11 helical transmembrane segments spans residues 9–29, 41–61, 86–106, 119–139, 148–168, 184–204, 222–242, 270–290, 320–340, 345–365, and 377–397; these read ITWIQGTALTIGAVLGCGILI, ASLFVWVFMSFLSFFLVGTLA, GAILGWIMLGSVPIGVPIIAL, ADWQITLIAGCMLAISILLHM, ISTLVICVIVFLLVTSIAVSL, WSAAGSVSVMIFFSFVGWEMI, LFLAASCVAGLYIMLSFVTVG, VTVCLALFITFATIHANIAGF, VLTAMAAVFGLVLAAHGLFQI, LLKGPSAAFIASYICTMAAAL, and MALGAFVACAVIYSFSGWALL.

The protein belongs to the amino acid-polyamine-organocation (APC) superfamily.

The protein resides in the cell membrane. This is an uncharacterized protein from Bacillus subtilis (strain 168).